The following is a 579-amino-acid chain: Moesin a (579 aa).

The region spanning Ile-5–Arg-295 is the FERM domain. The stretch at Lys-306 to Lys-448 forms a coiled coil. Disordered stretches follow at residues Gln-308–Glu-341, Glu-376–Ala-418, and Lys-464–Arg-519. Residues Glu-376–Lys-400 are compositionally biased toward basic and acidic residues. Residues Ala-490 to Ala-501 are compositionally biased toward low complexity. Positions Tyr-502–Arg-519 are enriched in basic and acidic residues. Residues Asn-517–Val-551 are a coiled coil.

Its subcellular location is the cell membrane. The protein resides in the cell junction. Positively regulates endothelial adherens junction formation and stabilization. Is thereby required for intersegmental vessel luminal membrane formation and stabilization during tubulogenesis in the early stages of development, independent of blood flow dynamics. The sequence is that of Moesin a from Danio rerio (Zebrafish).